The chain runs to 174 residues: Large ribosomal subunit protein uL10 (174 aa).

Belongs to the universal ribosomal protein uL10 family. In terms of assembly, part of the ribosomal stalk of the 50S ribosomal subunit. The N-terminus interacts with L11 and the large rRNA to form the base of the stalk. The C-terminus forms an elongated spine to which L12 dimers bind in a sequential fashion forming a multimeric L10(L12)X complex.

Its function is as follows. Forms part of the ribosomal stalk, playing a central role in the interaction of the ribosome with GTP-bound translation factors. In Coxiella burnetii (strain CbuK_Q154) (Coxiella burnetii (strain Q154)), this protein is Large ribosomal subunit protein uL10.